Consider the following 1280-residue polypeptide: SET and MYND domain-containing protein DDB_G0284059 (1280 aa).

Disordered stretches follow at residues 1 to 35 and 111 to 167; these read MTKKIKLSNSESNKVNNNNNNNHGNGHNHNHSHNH and INKI…QKQQ. Low complexity-rich tracts occupy residues 16-25 and 117-153; these read NNNNNNNHGN and ENSPPSSPTLSSSTNTTTDRQELPQQQQQPQQQQSQP. TPR repeat units follow at residues 272–305 and 383–416; these read SKGYKNKGNELFQKKQYSDALLLYNESLRIYDME and HKLYYRRGICYYHLRKHYKAKKDFLRAHTLIEKR. The stretch at 439–468 forms a coiled coil; it reads QKDEEIEQELDNKNNNSNDDEKQQQQQQQQ. Residues cysteine 533, cysteine 536, cysteine 546, cysteine 549, cysteine 555, cysteine 559, histidine 568, and cysteine 572 each contribute to the Zn(2+) site. The MYND-type zinc finger occupies 533–572; the sequence is CYNCFKEILSPIYCKECSNSQYCSNKCLNEDYVKQHGREC. Disordered stretches follow at residues 601–642, 659–726, 854–905, and 1039–1079; these read ANKG…QNLN, ALSS…TTTT, QQQQ…PFSP, and AKLQ…LNNN. Low complexity-rich tracts occupy residues 659–697, 712–726, 854–898, 1042–1053, and 1061–1079; these read ALSSASTPTTATATTTTTTTTATTPTTLAETLSSTSLTE, SSSSSSSSSSSTTTT, QQQQ…QNPP, QQQQQQQQQHQQ, and NSNPTNLGSNNNNNYLNNN. Residues 822-965 enclose the SET domain; the sequence is CQLTTYTFAI…KGEEILGCYG (144 aa). One copy of the TPR 3 repeat lies at 1218-1251; the sequence is GREYSKLGQIYLTLGEIEKSEDAIEKAESILMSW.

This sequence belongs to the class V-like SAM-binding methyltransferase superfamily.

Its function is as follows. Probable methyltransferase. This chain is SET and MYND domain-containing protein DDB_G0284059, found in Dictyostelium discoideum (Social amoeba).